A 321-amino-acid polypeptide reads, in one-letter code: MTKYALVGDVGGTNARLALCDIASGEISQAKTYSGLDYPSLEAVIRVYLEEHKVEVKDGCIAIACPITGDWVAMTNHTWAFSIAEMKKNLGFSHLEIINDFTAVSMAIPMLKKEHLIQFGGAEPVEGKPIAVYGAGTGLGVAHLVHVDKRWVSLPGEGGHVDFAPNSEEEAIILEILRAEIGHVSAERVLSGPGLVNLYRAIVKADNRLPENLKPKDITERALADSCTDCRRALSLFCVIMGRFGGNLALNLGTFGGVFIAGGIVPRFLEFFKASGFRAAFEDKGRFKEYVHDIPVYLIVHDNPGLLGSGAHLRQTLGHIL.

8-13 (GDVGGT) contributes to the ATP binding site.

The protein belongs to the bacterial glucokinase family.

Its subcellular location is the cytoplasm. It catalyses the reaction D-glucose + ATP = D-glucose 6-phosphate + ADP + H(+). Not highly important in E.coli as glucose is transported into the cell by the PTS system already as glucose 6-phosphate. The sequence is that of Glucokinase from Escherichia coli O139:H28 (strain E24377A / ETEC).